The chain runs to 655 residues: UvrABC system protein B (655 aa).

Residues 25–181 enclose the Helicase ATP-binding domain; that stretch reads DGINKGEKEQ…IRKLVFMQYE (157 aa). 38–45 is a binding site for ATP; the sequence is GVTGSGKT. The Beta-hairpin motif lies at 91-114; it reads YYDYYQPEAYVPRTDTFIDKESSV. Positions 428–590 constitute a Helicase C-terminal domain; the sequence is QVEDLLGEVK…IVPKTTKRAL (163 aa). The UVR domain occupies 615 to 650; that stretch reads RLLISDLENDMKEAAAKLDFERAASLRDQIATLKGL.

It belongs to the UvrB family. Forms a heterotetramer with UvrA during the search for lesions. Interacts with UvrC in an incision complex.

It is found in the cytoplasm. The UvrABC repair system catalyzes the recognition and processing of DNA lesions. A damage recognition complex composed of 2 UvrA and 2 UvrB subunits scans DNA for abnormalities. Upon binding of the UvrA(2)B(2) complex to a putative damaged site, the DNA wraps around one UvrB monomer. DNA wrap is dependent on ATP binding by UvrB and probably causes local melting of the DNA helix, facilitating insertion of UvrB beta-hairpin between the DNA strands. Then UvrB probes one DNA strand for the presence of a lesion. If a lesion is found the UvrA subunits dissociate and the UvrB-DNA preincision complex is formed. This complex is subsequently bound by UvrC and the second UvrB is released. If no lesion is found, the DNA wraps around the other UvrB subunit that will check the other stand for damage. This is UvrABC system protein B from Methanobrevibacter smithii (strain ATCC 35061 / DSM 861 / OCM 144 / PS).